The following is a 329-amino-acid chain: Methionyl-tRNA formyltransferase (329 aa).

117-120 (SLLP) contacts (6S)-5,6,7,8-tetrahydrofolate.

It belongs to the Fmt family.

The enzyme catalyses L-methionyl-tRNA(fMet) + (6R)-10-formyltetrahydrofolate = N-formyl-L-methionyl-tRNA(fMet) + (6S)-5,6,7,8-tetrahydrofolate + H(+). In terms of biological role, attaches a formyl group to the free amino group of methionyl-tRNA(fMet). The formyl group appears to play a dual role in the initiator identity of N-formylmethionyl-tRNA by promoting its recognition by IF2 and preventing the misappropriation of this tRNA by the elongation apparatus. The protein is Methionyl-tRNA formyltransferase of Paracidovorax citrulli (strain AAC00-1) (Acidovorax citrulli).